We begin with the raw amino-acid sequence, 337 residues long: GTP 3',8-cyclase (337 aa).

The 225-residue stretch at 18 to 242 (NFGRRFHYLR…DKADILDGPA (225 aa)) folds into the Radical SAM core domain. Arg-27 serves as a coordination point for GTP. Positions 34 and 38 each coordinate [4Fe-4S] cluster. Tyr-40 provides a ligand contact to S-adenosyl-L-methionine. Cys-41 contributes to the [4Fe-4S] cluster binding site. Arg-76 contributes to the GTP binding site. Position 80 (Gly-80) interacts with S-adenosyl-L-methionine. Residue Thr-107 participates in GTP binding. Ser-131 contributes to the S-adenosyl-L-methionine binding site. Lys-168 is a binding site for GTP. S-adenosyl-L-methionine is bound at residue Met-202. Positions 265 and 268 each coordinate [4Fe-4S] cluster. 270-272 (RLR) provides a ligand contact to GTP. Cys-282 serves as a coordination point for [4Fe-4S] cluster.

This sequence belongs to the radical SAM superfamily. MoaA family. In terms of assembly, monomer and homodimer. Requires [4Fe-4S] cluster as cofactor.

It catalyses the reaction GTP + AH2 + S-adenosyl-L-methionine = (8S)-3',8-cyclo-7,8-dihydroguanosine 5'-triphosphate + 5'-deoxyadenosine + L-methionine + A + H(+). It participates in cofactor biosynthesis; molybdopterin biosynthesis. In terms of biological role, catalyzes the cyclization of GTP to (8S)-3',8-cyclo-7,8-dihydroguanosine 5'-triphosphate. This chain is GTP 3',8-cyclase, found in Shewanella denitrificans (strain OS217 / ATCC BAA-1090 / DSM 15013).